A 527-amino-acid chain; its full sequence is FAD-dependent monooxygenase CTB5 (527 aa).

The 178-residue stretch at 78–255 folds into the FAD-binding PCMH-type domain; the sequence is SDLHPSCIAL…TAVTLKTFGQ (178 aa).

Belongs to the oxygen-dependent FAD-linked oxidoreductase family.

The protein operates within mycotoxin biosynthesis. FAD-dependent monooxygenase; part of the gene cluster that mediates the biosynthesis of cercosporin, a light-activated, non-host-selective toxin. The perylenequinone chromophore of cercosporin absorbs light energy to attain an electronically-activated triplet state and produces active oxygen species such as the hydroxyl radical, superoxide, hydrogen peroxide or singlet oxygen upon reaction with oxygen molecules. These reactive oxygen species cause damage to various cellular components including lipids, proteins and nucleic acids. The first step of cercosporin biosynthesis is performed by the polyketide synthase CTB1 which catalyzes the formation of nor-toralactone. The starter unit acyltransferase (SAT) domain of CTB1 initiates polyketide extension by the selective utilization of acetyl-CoA, which is elongated to the heptaketide in the beta-ketoacyl synthase (KS) domain by successive condensations with six malonyl units introduced by the malonyl acyltransferase (MAT) domain. The product template (PT) domain catalyzes C4-C9 and C2-C11 aldol cyclizations and dehydrations to a trihydroxynaphthalene, which is thought to be delivered to the thioesterase (TE) domain for product release. The bifunctional enzyme CTB3 then methylates nor-toralactone to toralactone before conducting an unusual oxidative aromatic ring opening. The O-methyltransferase CTB2 further methylates the nascent OH-6 of the CBT3 product, blocking further oxidation at this site before the reductase CTB6 reduces the 2-oxopropyl ketone at position C7, giving naphthalene. The FAD-dependent monooxygenase CTB5 in concert with the multicopper oxidase CTB12 are responsible for homodimerization of naphthalene with CTB7 installing the dioxepine moiety, finally producing cercosporin. The fasciclin domain-containing protein CTB11 might act with CTB5 and CTB12 whereas the roles of CTB9 and CTB10 have still to be elucidated. The chain is FAD-dependent monooxygenase CTB5 from Cercospora beticola (Sugarbeet leaf spot fungus).